Reading from the N-terminus, the 475-residue chain is GTPase Der (475 aa).

2 consecutive EngA-type G domains span residues 3 to 167 (LTIA…GGER) and 205 to 380 (LRIA…RVWN). GTP contacts are provided by residues 9-16 (GRPNVGKS), 56-60 (DTAGL), 119-122 (NKSE), 211-218 (GRPNTGKS), 258-262 (DTAGL), and 323-326 (NKWD). One can recognise a KH-like domain in the interval 381–465 (RRISTGKLNR…PIRISLRASD (85 aa)).

This sequence belongs to the TRAFAC class TrmE-Era-EngA-EngB-Septin-like GTPase superfamily. EngA (Der) GTPase family. As to quaternary structure, associates with the 50S ribosomal subunit.

In terms of biological role, GTPase that plays an essential role in the late steps of ribosome biogenesis. This chain is GTPase Der, found in Bartonella henselae (strain ATCC 49882 / DSM 28221 / CCUG 30454 / Houston 1) (Rochalimaea henselae).